A 347-amino-acid chain; its full sequence is Ribosomal RNA small subunit methyltransferase H (347 aa).

Residues 47-49 (GGY), Asp64, Phe91, Asp114, and Gln121 contribute to the S-adenosyl-L-methionine site. The interval 291-347 (PAVKGAVGPTAEEEERNPRARSAKLRAGIRTENPPLEDDLSLFGLPKLPETNELARS) is disordered.

This sequence belongs to the methyltransferase superfamily. RsmH family.

It is found in the cytoplasm. The enzyme catalyses cytidine(1402) in 16S rRNA + S-adenosyl-L-methionine = N(4)-methylcytidine(1402) in 16S rRNA + S-adenosyl-L-homocysteine + H(+). Functionally, specifically methylates the N4 position of cytidine in position 1402 (C1402) of 16S rRNA. This Brucella anthropi (strain ATCC 49188 / DSM 6882 / CCUG 24695 / JCM 21032 / LMG 3331 / NBRC 15819 / NCTC 12168 / Alc 37) (Ochrobactrum anthropi) protein is Ribosomal RNA small subunit methyltransferase H.